The sequence spans 1172 residues: NACHT, LRR and PYD domains-containing protein 1b allele 3 (1172 aa).

The segment at 1–22 (MEESPPKQKSNTKVAQHEGQQD) is disordered. One can recognise an NACHT domain in the interval 126 to 435 (QLVIIEGAAG…EFFAAISCIL (310 aa)). 132-139 (GAAGIGKS) lines the ATP pocket. LRR repeat units lie at residues 627 to 647 (NLEGLDLSGNSLRYSVVQSLC) and 684 to 704 (SLTELYLQLNDLGDDGVRMLC). The interval 789–922 (FWGPTGPVAT…GYTVLKNPSF (134 aa)) is ZU5. The FIIND domain maps to 789–1072 (FWGPTGPVAT…LRPALPRIAQ (284 aa)). The interval 923–1072 (SPMGDVLRII…LRPALPRIAQ (150 aa)) is UPA. The CARD domain maps to 1082–1165 (HFMDQHREQL…HLVMDLLEKS (84 aa)).

It belongs to the NLRP family. In contrast to allele 1 and 2, not able to mediate autocatalytic cleavage. As to expression, expressed in macrophages.

The protein localises to the cytoplasm. The protein resides in the cytosol. Its activity is regulated as follows. In contrast to allele 1, does not undergo autocatalytic cleavage within the FIIND domain and its mode of activation remains unclear. In contrast to alleles 1 and 2, allele 3 is not activated by Val-boroPro (Talabostat, PT-100). Not activated by cleavage by B.anthracis lethal toxin (LT) endopeptidase. Not activated by metabolic inhibitors, such as 2-deoxy-D-glucose and sodium azide. Functionally, may act as the sensor component of the Nlrp1b inflammasome, which mediates inflammasome activation in response to various pathogen-associated signals, leading to subsequent pyroptosis. Inflammasomes are supramolecular complexes that assemble in the cytosol in response to pathogens and other damage-associated signals and play critical roles in innate immunity and inflammation. May act as a recognition receptor (PRR), which recognizes specific pathogens and other damage-associated signals and forms an inflammasome complex: the inflammasome directly recruits pro-caspase-1 (proCASP1) independently of PYCARD/ASC and promotes caspase-1 (CASP1) activation, which subsequently cleaves and activates inflammatory cytokines IL1B and IL18 and gasdermin-D (GSDMD), leading to pyroptosis. In the absence of GSDMD expression, the Nlrp1b inflammasome is able to recruit and activate CASP8, leading to activation of gasdermin-E (GSDME). Contrary to Nlrp1b allele 1, allele 3 is not activated by Bacillus anthracis lethal toxin. The absence of autocatalytic cleavage within the FIIND domain, which regulates activation in other alleles, suggests that allele 3 may be non-functional. The protein is NACHT, LRR and PYD domains-containing protein 1b allele 3 of Mus musculus (Mouse).